We begin with the raw amino-acid sequence, 8886 residues long: MDHSFSGAPRFLTRPKAFVVSVGKDATLSCQIVGNPTPHVSWEKDRQPVEAGARFRLAQDGDVYRLTILDLALGDSGQYVCRARNAIGEAFAAVGLRVDSEGTCAEQAPHFLLRPTSIRVREGADATFRCRVGGSPQPAVSWSKDGRRLGPPDAPHVRVEEHGESSALRIRSARPRDGGTYEVRAENPLGSASAAAALVVDSDAEVAGPPGTSTATLLAHLQQRREAMRAEGIPPSPPGAGTRTCTVTEGKHARLSCFVTGEPKPETVWKKDGQLVTEGRRHVVYEDEQENFVLKILFCKQSDRGLYTCTASNLVGQTYSSVLVVVREPTVPFKKRLQDLEVREKESATFQCEVAQPATEAAWFKEETRLWASAKYDIEEEGTERRLTVRNVSADDDAVYICETTEGSRTVAELSVQGNLTRKLPRKTAVRTGDTAIFWVELAVPEGPVRWLRNQEEMVAGGRVAITAEGTCHTLTIFQCTLEDMGEVAFVSGGCRTTTQFCVSAPRRPPLYPPADPVVKAKTESSVTLSWSAPPHGDRPVTIDGYVLEKRKLGAYAWSRCHEAGWLATTEFTITGVAEEGDFQFRVSAINHFGQGPYLEFPGTMHLVPMLAVKTPLKAVEAVEGGEVTFSVDLTVASSGEWFLDGEALKASSIYVIRCDRTRHMLTIREVPARLHGAQLKFVANGIETSIQMVVRAALGLPSSKLPAAAAREVLAQLHEEAQLLAELSDQAAAVTWLKDGRELSLGPKYEMQVSAGRRALLVRDVAQDDAGLYECVSRGSRTAYQLLVQDITDGYRDWGPAGPQKHMCKCAGAKIARYLGSSCYRFLQYDKGVWHWLEAALDTRQGKGTSSCSLHEKPKLVFAKGQQAHSEVKAEAGNSATLSCEVTQAQTEVTWFKDGKKLSSSSKVRMEASGCSRRLVVQQAGKADAGEYSCEAGGQKLSFRLDVAEPKLVFAKGQQAHSEVKAEAGASATLSCEVAQAQTEVTWFKDGKKLSSSSKVRMEASGCSRRLVVQQAGKADAGEYSCEAGGQKLSFRLDVAEPKMVFAKEQQARSEVKAEAGASATLSCEVAQAQTEVTWFKDGKKLSSSSKVRMEASGCSRRLVVQQAGKADAGEYSCEAGGQKLSFRLDVTEPKLVFAKEQQARSEVKAEVGNSATLSCEVAQAQTEVTWFKDGKKLSSSSKVRMEASGCSRRLVVQQAGKADAGEYSCEAGGQKLSFRLDVAEPKLVFAKEQQARSEVKAEAGNSATLSCEVAQAQTEVTWFKDGKKLSSSSKVRMEASGCSRRLVVQQAGKADAGEYSCEAGGQKLSFHLDVTEPKLVFAKEQQAHSEVKAEAGASATLSCEVAQAQTEVTWFKDGKKLSSSSKVRMEASGCSRRLVVQQAGKADAGEYSCEAEGQKLSFRLDVAEPKLVFAKEQQARSEVKAEAGASATLSCEVAQAQTEVTWFKDGKKLSSSSKVRVEASGCSRRLVVQQAGKADAGEYSCEAGGQKLSFRLDVAEPKLVFAKEQQANSEVKAEAGASATLSCEVAQAQTEVTWFKDGKKLSSSSKVRVEASGCSRRLVVQQAGKADAGEYSCEAGGQKLSFRLDVAEPKLAFAKEQQAHSEVKAEAGASATLSCEVAQAQTEVTWFKDGKKLSSSSKVRVEASGCSRRLVVQQAGKADAGEYSCEAGGQKLSFRLDVAEPKLAFAKEQQAHSEVKAEAGASATLSCEVAQAQTEVTWFKDGKKLSSSSKVRVEASGCSRRLVVQQAGKADAGEYSCEAGGQKLSFRLDVAEPKLAFAKEQQAHSEVKAEAGASATLSCEVAQAQTEVTWFKDGKKLSSSSKVRVEASGCSRRLVVQQAGKADAGEYSCEAGGQKLFFRLDVAEPKLMFAKEQQAHSEVKAEAGASATLSCEVAQAQTEVTWFKDGKKLSSSSKVRVEASGCSRRLVVQQAGKADAGEYSCEAGGQKLSFRLDVAEPKLVFAKEQQAHSEVKAEAGASATLSCEVAQAQTEVTWFKDGKKLSSSSKVRVEASGCSRRLVVQQVGKADAGEYSCEARGQKLSFRLDVADTRLMFAKEQQARTEVKAEAGNSATLSCEVAQAQTEVTWFKDGKKLSSSSKVRVEASGCSRRLVVQQAGKADAGEYSCEAGGQKLSFRLDVAEAESQIPERPSRREPLVVKEHETIILTATIAAPSVAAVTWLKDGVEIRRSKRHEATSLGDTHTLTVRGAQVLDSAIYSCRVGKEGQDFPVQVEEVAAKFSKPLEPVEGELGGTVMLVCELSPEQAEVVWRCGNTQLRPGKRFQMTSEGPRRTLTVSGLREDDAEEYVCESRDDRTSARLTVKVPRVVKFTSGLSAMVAEEGQEATFQCVVSPSDAGVTWYKDGMQLQPSEKFVMVESGASRSLTILGLTLEDAGQVTVEAEGASSSAALRVREAPVLFKKKLEPQTVEERTSVTLEVELTRPWPEVKWTRNAAVLTPSENVEIRAEGARHCLVLRSVGFADRGFFGCETPDDKTQAKLNVEMRQVRLVRGLQEVEAKEQGTASMDVELSHAEVEGSWTRDGLRLQPGPKCHLAVQGPVHILTLSALQPQDSGLVAFRAEGVHTSARLIVTELPVSFTRVLQDVVATQKEKVTLECELSRPVDVRWLKDGVELRAGKAIGIVAQGTCRSLVIYRCETGDQGVYVCDALDAQTSASLRVQGRTYTLIFRRVLAEDAGEVKFVAENAESRAHLRVKELPVTLLRPLRDKIAMEKHRGVLECQVSRASAQVRWFKGGVELQSGPKYEVVSDGLYRKLVINDVQPEDEDTYTCDAGNVKTSAQFFVEEQSITIVRGLKDMTVMEPAPAWFECETSIPSVRPPKWLLGKTVLQAGGNVGLEQDGTVHRLTLHKTCSTMTGPVHFTIGKSRSSAQLVVSDIPVVLTRPLEPKAGRELQSVVLSCDFRPAPKAVQWYKDDTPLSPSEKFKMALEGQMAELRILRLTPADAGVYRCQAGSAQSSAEVTVEAREVTVIQPLQDAEAMEEGRVCFSCELSHKDEDIEWSLNGTPLYNDSFHEISHEGCLHTLVLKSVRQADTGTVCATSPKVSVSARLVVKGKPVVFLKALDDVSAEERGTLTLQCEVSDPEARVVWRKDGVELGPSDKYDFLHKAGARGLTVHDLSHEDAGLYTCQVGSKETQSKVSVHDLHVGITKRLKTVEVLEGESCSFECVLSHESPSDPAVWTVGGKTVGGSGHFHAVRQGRKYTLTVKDAALSDAGEVVFSVLGLTSKASLIIRERPVDITKPLEDQRTTLGEDVMLSCELSRAGTSVRWLKDGKAIRKSQKYDLLSEGTRAVLVVRKASLKDSGEYTCETEASKSTAKLCVEEKANRFTEELADLQVEEKGRAVFTCKTEHPASVVTWRKGLLELRASGKHVPSQEGLTLKLTINALERTDSDTYTCDIGQARTQARLLVHGQKVRVIEDLEDTAVQEGSSAKFCCRIAPADYGPVHWFLDKTPLHSNELNEITVQPGGYHVLTLRQLALKDSGTVYFEAGDQRTSAALRVTEKPSIFSRPLTDVTVTEGEDLTLVCETTTVDSSVRWTKDGKTLRPSARCQLSHEGCQAQLLITATTPQDGGRYKCEIGGASSSSIVRVHALPVRFRESLKDVEVPEGKAATLRCVLSSVAAPVEWRHGDDVLKSSNKYSLRQEGAVLELVIRDLQPQDSGQYSCSFGDQTTSATLTVKTSSAQFVGKLRNKEATEGTTVTLRCELTKEAPVEWKKGTETLRNGDKYSLKQDGAVCELQICSLLVADAGEYSCVCGQEKTSATLTVKALLVHFVRRLRSKEATEGDTTTLQCELSKAAPVEWRKGTETLRDGDRYSLKQDGAVCELQIRSLTIADAGEYLCTCGQEKTSATLTVRALPAKFKDSLKNEEATEGTTATLSCELSKAAPVTWKKGPKTLQSGDKYVLRQDGAVCGLQIHGLTMADAGEYSCVCGQEKTSATLTVRGLPAKFIEDLRSQEATEGATAILRCELSKAAPVEWRKGSETLKDGDRYTLRQDGAVCELQIRGLAVVDTGTYSSLPTKFTEGLRNEEATEGTMATLRCQMSKAAPVEWRKGSETLRDGDRYSLRQDGAMCELQIRGLTIEDSGEYTCVCGQEKTSATLSVKALPSRFIEDLRSQEATEGTMATLRCQMSKTAPVEWKKGSETLRDGGRYSLRQDGPVCELQICDLAVEDAGEYSCVCGQEKTSATLSIKALPPRFIEDLRSQEATEGTMATLRCQMSKAAPVEWRKGSETLGDGGRYSLRQNGAVCELQIHDLAVEDTGEYSCVCGQEKTSATLNVKALPPRFIEDLRSQEATEGTMATLRCQMSKAAPVEWRKGSETLRDGGRYSLRQDGAVCELQIHDLDVEDAGQYSCVCGQEKTSAVLTVDALPPKFTEGLKKEEATEGTMVTLRCQMSKEATVEWRKGAKTLSDGGRYSLRQDGAMCELQICGLAVEDAGEYSCVCGQEKTSATLSVKALPPRFIEDLRSQEATEGTMATLRCQMSKAAPVEWRKGSETLRDGDRYSLRQDGAVCELQIRDLAVEDAGEYLCVCGQEKTSATLSVKALPPRFIEDLRSQEATEGTMATLRCQMSKAAPVEWRKGSKTLRDGDRYSLRQDGAMCELQICDLAVEDTGDYSCVCGQEKTSATLSVKALPPRFIEDLRSQEAREGTVATLRCRMSKAAPVEWRKGSETLKDGDRYSLRQEGNLCELQIRDLAVEDTEEYSCVCGQEKTSATLSVKALPAKFIEDLRSQEAPESSTVTLRCKLSKKASVVWKKGSETLRNGARYSLRQDGAVCELEIRDLTVEDTGEYSCTCGQERTSATLSIMAPQVVFQQPLQNLQAEEGSMASLRCELSVPNAAMVWSKGGLELQGDTRREARQQGCVAELLLRDLRREDAGEYSCTCGSQTTSATLMVTAAPVRFLRELQAQDVDEGATARLRCELSREAVSVEWRKGSLQLFPCAKYQMVQEGTTAELLVHGVEQEDAGEYTCDAGHTQSIARLSVRAPKPKFKTDLQSTEQEAGGTARLCCQLSEAEPGTPVQWLKEGVELHVGSKYEMRRQGAVCELLIHGLEAKDTGEYACLVGGQKTLASLRVKEPEVTIVRGLVDMEVQADEDVEFTCKVSQAGATDVQWHLQGLPLQSNEVTEVAVLADGCTHVLQLKGVTLEDAGTVSFHVGGLSSSAQLTVRVPEVTVLEPLKDVQLSEGQDAHFRCRLSRASGQEARWALGGVPLQCNEMNDITVEQGTLYLLTLHKVTLEDAGTITLQVGSCSSEAQLKVTAKNTVLRGLENVDALEGGEALFECQLSQPEVAAHTWLLDDEPVHTSEKVEVVYFENGLRHLLLLKNLKPQDSCRVTFLAGDVVTSAFLTVRGWRLEVLEPPHDASVKAGMQVRFTCILSEAVPVGEATWYINGAAIQPDDTDWTVTTDGSHHALTLSNAQPQHAGEVTFAARDAVASARLSVLALPDPPEDAEVVGRSDHSVTLSWVAPMSDGGGGLCGYRVEMKEASTGQWQLCHDLVPGPECVVDDLVPGKTYRFRVAAVGPAGAGEPVHLPQMVKIAPAPAPAPAPAPAPAPETRQAVVGEDICLELEVAADGGEVVWHKGTERIQPGGHFEVLSRGQRQMLVIKGFRTEDQGEYRCGPIQGLPSSGAATFNVVMTSGSGDEVPAQPSLPPEAAQEGDLHLLWEALARKRRMSREPTLDSISELPEEDSRVQHLRQEAEETAPDLSEGYSTADELARTGEADLSHTSSDDESRAGTPSLVTYLKKAGGPGISPLASKHEAQVTTSVKPQKQQEPVVPTCPPPGDLSAADLMDPSLDKAAVKIQAAFKGYKVRKEMKQQEGPVFSRTFGDTEAQVGDVLRLECVLATKTDMRACWLKDGIELTDGRHYHIDQLKDGTCSLLVTGLAPTDSGRYTCQVSTKSGRVSHSACVVVSGTESEAESSSGGELDDAFRRAARRLHRLFRTKSPAELSEEELFLSADEGPGEPEEPADWQTYREDENFVCIRFESLAEARQAVTCFRNMFATMGIGVEISLGEQGPRGVEMRIGKVAPTVTPAVPLAKTPGLQTSDAAPVFLTELQNQDVQDGYPMSFDCVVTGQPVPSVRWFKDGKLLEEDDHYMINEDQQGGHQLIITAVVPADMGVYRCLAENSMGVSSTKAELRVELTSTDYDTAADATETSSYFSAQGYLSSREQEGTESDEGQLPQVLEELKDLQVAPGTRLAKFQLKVKGYPAPKLYWFKDGQPLTTSDHIRMTDKKTLHTLEIVSVTREDSGQYAAYISNAVGAAYSSARLLVRGPSEPEEKPASDVHERLVPPRILEKFTPKKVKRGSSITFSVKVEGHPAPSVHWLKEEAEKGVLWIGPDTPGYTMASSSKQHSLVLLDVGRQHQGTYTCIATNPAGQALCSASLHISGLAKEEEQERVKEALISSFLQGTSQAVSAQMSESAGFADLVGQSKGESLVAEEAHSHLSLAEVGTEEFLQKLTSQITEMVSAKISQAKLQVPGGDSDEETKTPSASPRHGRSRPSSSVQESSSESEDGDSRGEIFDIYVVTADYLPLGAEQDAIILREGQYVEVLDSAHPLRWLVRTKPTKSSPSRQGWVSPAYLDKRLKLSPEWGPTEAPEFPGEAVSEDEYRTRLSSVIQELLSSEQAFVGELQFLESHHMKHLERSPRVPAAVASQKTVIFRNVQDISHFHSSFLKELQGCGTDDDVAMCFIKNQEAFEKYLEFLVGRVQAESVVVSTPVQEFYKKYAEETLSAKDPTQPPPPPLQHYLEQPVERVQKYQALLKELIRNKARNRQNCALLEQAYAVVSALPQRAENKLHVSLMENYPGTLEALGEPIRQGHFIVWEGAPGARMPWKGHNRHVFLFRNYLVICKPRRDSRTDTFSYVFRNMMKLSSIDLNDQVEGDDRAFEVWHEREDSVRKYLLQARTVIIKNSWVKEICGIQQRLAQPVWRPPEFEEELADCTAELGETVKLACRVTGTPKPIVSWYKDGKPVEVDPHHILIEDPDGSCTLILDNLTGIDSGQYMCFAASAAGNASTLGKILVQVPPRFVNKVRATPFVEGEDAQITCTVEGAPYPQIRWYKDGTLLAPGNRYRMLNEPRSGVLVLVIQAASKEDLGHYECELVNRLGSTRGGGELYMQSPALRARDQHHREQIVAAVEDTSVEGSAHSAQDGADQQAASVLWRLLGSEALGPSPGDLPNTRQSEPPAFEEAASQIPGAASGTPEVSQPGTHKGLEQETTSSGSQGWTVPIRVEGTAWPGAGTGQLLLDVHSQVIMETTQRTYVCQAPDTGVTRAPSMQVTIEDVQVQVGDMAQFDAVIEGHPPPIVTWYKGSTQLTSSARLSQRQDGTTYSLVLTDVAPHDAGVYTCVANNAGGQVLCKAELLVHGGDKLDAENQVYRRKLHSFYDVQEEIGRGVFGFVKRVQHKGNKMFCAAKFIPLRSKTRAQAYQERDILATLGHPLVTGLLDQFETRKTLILILELCSSEELLDRLFKKGVVTEAEVKVYIQQLVEGLHYLHSHGILHLDIKPPNILMVHPAREDIKICDFGFAQKITPSEPQYSKYGSPEFVSPEIIEQNPVSEGSDIWAMGVISYLSLTCSSPFAGESDRATLLNVLEGRVSWSSPTAAHLSEDAKDFIKATLQRTPRARPSTSQCLAHPWFLKSMPAEEAHFINTKQLKFLLARSRWQRSLMSYKSILVMRSIPELLQGPPDSPSLGVARHLRGEASGASSSSSSSDNELAPFARAKSLPPSPVTHSPLLHPRGFLRPSASLPEETEASMPTADAAVPASPQSAGPPASPGCVPRHSVISSLFYQQAGEGAERGNKTSGAKRHPARRRHLLKGGYIARALPGLREPLMEYSLLEEEAAREEQASLMTKTPSFETALRLPSSSVREVPGRSHSLDNPPVTTGPSPEACKEQLLFPPSTGLTHETTAKDRGHKEGFLQESVPFPPMSGDSRPGKQEGSSQDSCRGKPASSCHSELGSGSQEGCGPPSSQSLGSLPPQSLKKELSTSCGPLFSEQPQAAPFPTQVSPLLGSEKEPQDGSLSEGPVPVPSSSPGSASQVDASLDTEGLSEAGDTCDFTPPPQRPQEQATTRKFSLESRGGYAGVAGYGTFAFGGDAGGMLGQGPLWARMAWAVSQSSEEQDEAATESPQPLESLGPIAEASGVPLRTSPSLTPWEEVEQVSLVQIRDLSGDAEAADTISLDISEVDPAYLNLSDLYDIKYLPFEFMIFRRVPKPIEQPESPGSETEAGQGLADFLEEAAWPWPGELGLRAGLEITEEPEEPGDLEALLGEAAVGRKRKWSPSRGLFQFPGRCLSGEEPVELGLRQRVKASMAHISRILKGRPEGPEREGPPRKKAGLASFRLSGLKGRDQELSDEAVVLGQSVTLACQVLAQPTAQATWSKDGVLLESSGHLLISSTLKNFQLLTILVVKEEDLGTYTCCVSNPLGTAVTTGVLRKAERPSSSPRPEVGELYKDAVLLVWKPVESCGPVTYIVQCCIEGGSWTTLASDISDCCYLTGKLSRGGMYIFRTACVSKAGMGPYSSPSEQVLLGGPNHLASEEESSRGRPAQLLPSTKTFAFQMQIRRGRFSVVRQCREKASGRALAAKIVPYQPEDKTAVLREYEALKRLHHPHLAQLHAAYLSPRHLVLILELCSGPELLPSLAERESYSESDVKDYLWQMLSATQYLHAQHILHLDLRSENMMVTEYNLLKVIDLGNAQSLDQEKVPAPENFKDYLETMAPELLEGQGAVPQTDIWAIGVTAFIMLSGEYPESSEGTRDLQKGLRKGLIRLSRCYAGLSGGAVAFLQSSLCAQPWGRPCASTCLQCGWLTEEGPTGSRPTPVTFPTVRLRAFVREREKRRALLYKKHNLAQVR.

4 Ig-like domains span residues 9–99, 109–201, 234–320, and 329–415; these read PRFL…LRVD, PHFL…LVVD, PPSP…QTYS, and PTVP…AELS. Cys30 and Cys81 are disulfide-bonded. The segment at 135–165 is disordered; it reads SPQPAVSWSKDGRRLGPPDAPHVRVEEHGES. A compositionally biased stretch (basic and acidic residues) spans 144-164; that stretch reads KDGRRLGPPDAPHVRVEEHGE. Intrachain disulfides connect Cys257/Cys309 and Cys352/Cys402. A Phosphoserine modification is found at Ser393. Positions 513-610 constitute a Fibronectin type-III 1 domain; it reads PPADPVVKAK…FPGTMHLVPM (98 aa). Ig-like domains are found at residues 702–793, 859–951, 951–1043, 1043–1135, 1135–1227, 1227–1319, 1319–1407, 1411–1503, 1503–1595, 1595–1687, 1687–1779, 1779–1871, 1871–1963, 1963–2051, 2055–2147, 2152–2241, 2242–2325, 2329–2415, 2420–2504, 2598–2681, 2721–2812, 2900–2984, 3078–3162, 3258–3342, 3348–3431, 3527–3610, 3616–3700, 3785–3876, 3881–3964, 4042–4125, 4130–4213, 4219–4301, 4307–4389, 4395–4477, 4483–4565, 4571–4653, 4659–4741, 4746–4829, 4833–4916, 4923–5007, 5013–5105, 5378–5464, and 5557–5659; these read PSSK…QDIT, PKLV…VAEP, PKMV…VTEP, PKLV…VTEP, PKLV…FRLD, PKLA…VAEP, PKLM…VAEP, TRLM…VAEA, PERP…EEVA, AKFS…ARLT, PRVV…AALR, PVLF…AKLN, PVSF…ASLR, PVTL…QSIT, PVVL…AEVT, PVVF…SKVS, PVDI…AKLC, NRFT…ARLL, PSIF…SSIV, PVRF…ATLT, ATLT…ATLT, PAKF…ATLT, PTKF…ATLS, PSRF…ATLS, PRFI…ATLN, PRFI…AVLT, PKFT…ATLS, PRFI…ATLS, PAKF…ATLS, PQVV…TSAT, PVRF…ARLS, PKFK…PEVT, LEVL…ARLS, and PQMV…TFNV. Cystine bridges form between Cys885-Cys935, Cys977-Cys1027, Cys1069-Cys1119, Cys1161-Cys1211, Cys1253-Cys1303, Cys1345-Cys1395, Cys1437-Cys1487, Cys1529-Cys1579, Cys1621-Cys1671, Cys1713-Cys1763, Cys1805-Cys1855, Cys1897-Cys1947, Cys1989-Cys2039, and Cys2081-Cys2131. Cys2263 and Cys2313 form a disulfide bridge. Disulfide bonds link Cys2620–Cys2669, Cys2743–Cys2793, Cys2922–Cys2972, Cys3100–Cys3150, Cys3280–Cys3330, Cys3369–Cys3419, Cys3549–Cys3599, and Cys3638–Cys3688. Residue Ser3321 is modified to Phosphoserine. Residue Ser3802 is modified to Phosphoserine. 14 disulfide bridges follow: Cys3815/Cys3864, Cys3903/Cys3952, Cys4064/Cys4113, Cys4152/Cys4201, Cys4240/Cys4289, Cys4328/Cys4377, Cys4416/Cys4465, Cys4504/Cys4553, Cys4592/Cys4641, Cys4680/Cys4729, Cys4768/Cys4817, Cys4856/Cys4906, Cys4945/Cys4995, and Cys5034/Cys5086. Ser4960 carries the phosphoserine modification. The Fibronectin type-III 2 domain occupies 5471 to 5569; the sequence is PPEDAEVVGR…VKIAPAPAPA (99 aa). Cysteines 5590 and 5643 form a disulfide. Ser5699 carries the post-translational modification Phosphoserine. The disordered stretch occupies residues 5700 to 5736; that stretch reads REPTLDSISELPEEDSRVQHLRQEAEETAPDLSEGYS. Position 5703 is a phosphothreonine (Thr5703). A Phosphoserine modification is found at Ser5706. Residues 5713–5724 are compositionally biased toward basic and acidic residues; sequence EDSRVQHLRQEA. Position 5737 is a phosphothreonine (Thr5737). At Ser5754 the chain carries Phosphoserine. The IQ domain maps to 5821 to 5850; the sequence is LDKAAVKIQAAFKGYKVRKEMKQQEGPVFS. Positions 5847 to 5930 constitute an Ig-like 48 domain; that stretch reads PVFSRTFGDT…QVSTKSGRVS (84 aa). A disulfide bond links Cys5868 and Cys5920. The disordered stretch occupies residues 5977–5996; sequence EEELFLSADEGPGEPEEPAD. Ig-like domains are found at residues 6077 to 6166, 6209 to 6298, and 6320 to 6416; these read PVFL…AELR, PQVL…ARLL, and PRIL…LHIS. Cys6098 and Cys6150 are disulfide-bonded. Positions 6504–6546 are disordered; that stretch reads KLQVPGGDSDEETKTPSASPRHGRSRPSSSVQESSSESEDGDS. Residue Ser6512 is modified to Phosphoserine. A Phosphothreonine modification is found at Thr6518. The span at 6519-6538 shows a compositional bias: low complexity; the sequence is PSASPRHGRSRPSSSVQESS. A phosphoserine mark is found at Ser6520 and Ser6522. An SH3 domain is found at 6549–6616; sequence EIFDIYVVTA…SPAYLDKRLK (68 aa). A DH domain is found at 6642 to 6826; it reads RLSSVIQELL…SALPQRAENK (185 aa). The region spanning 6844 to 6953 is the PH domain; that stretch reads EPIRQGHFIV…WVKEICGIQQ (110 aa). Residue Arg6924 coordinates a 1,2-diacyl-sn-glycero-3-phospho-(1D-myo-inositol-4,5-bisphosphate). Position 6929 (Arg6929) interacts with a 1,2-diacyl-sn-glycero-3-phospho-(1D-myo-inositol-3,4-bisphosphate). 2 Ig-like domains span residues 6963–7046 and 7057–7147; these read PEFE…GNAS and PRFV…GELY. 2 cysteine pairs are disulfide-bonded: Cys6984–Cys7036 and Cys7078–Cys7131. Residues 7200 to 7257 are disordered; sequence ALGPSPGDLPNTRQSEPPAFEEAASQIPGAASGTPEVSQPGTHKGLEQETTSSGSQGW. The span at 7247-7257 shows a compositional bias: polar residues; that stretch reads QETTSSGSQGW. In terms of domain architecture, Ig-like 54 spans 7306–7394; sequence PSMQVTIEDV…GQVLCKAELL (89 aa). The Protein kinase 1 domain maps to 7416-7669; sequence YDVQEEIGRG…TSQCLAHPWF (254 aa). ATP contacts are provided by residues 7422–7430 and Lys7445; that span reads IGRGVFGFV. The active-site Proton acceptor is Asp7535. Disordered regions lie at residues 7717–7810, 7879–8106, and 8150–8180; these read GPPD…SPGC, EQAS…TTRK, and SSEEQDEAATESPQPLESLGPIAEASGVPLR. Ser7779 carries the phosphoserine modification. Positions 7793–7804 are enriched in low complexity; sequence AAVPASPQSAGP. Over residues 7941–7952 the composition is skewed to basic and acidic residues; it reads TTAKDRGHKEGF. Residues 7986–7996 are compositionally biased toward polar residues; that stretch reads SCHSELGSGSQ. 2 stretches are compositionally biased toward low complexity: residues 8000–8014 and 8053–8073; these read GPPSSQSLGSLPPQS and GSLSEGPVPVPSSSPGSASQV. Ser8161 bears the Phosphoserine mark. The Ig-like 55 domain maps to 8380 to 8464; sequence KGRDQELSDE…VSNPLGTAVT (85 aa). Cys8401 and Cys8453 are oxidised to a cystine. The Fibronectin type-III 3 domain maps to 8474 to 8566; it reads PSSSPRPEVG…PSEQVLLGGP (93 aa). The Protein kinase 2 domain occupies 8590-8842; sequence FAFQMQIRRG…ASTCLQCGWL (253 aa). Residues 8596–8604 and Lys8619 each bind ATP; that span reads IRRGRFSVV. Residue Asp8709 is the Proton acceptor of the active site.

Belongs to the protein kinase superfamily. CAMK Ser/Thr protein kinase family. As to quaternary structure, interacts (via protein kinase domain 1) with CDH2 and (via protein kinase domain 1) with ATP1B1. Isoform 2 is found in a complex with DSG2, DESM, GJA1, CDH2 and VCL. Isoform 3 is found in a complex with DSG2, DESM, GJA1, CDH2, ANK3 and VCL. Mg(2+) serves as cofactor. In terms of processing, autophosphorylated by protein kinase domain 1 and 2. Post-translationally, two small isoforms, one probably containing protein kinase domain 2 and a partial protein kinase domain 1 and one containing only protein kinase domain 2, are glycosylated. Expressed in skeletal muscles including flexor digitorum brevis (FDB), soleus and tibialis anterior muscles, and to a lesser extent in heart muscles (at protein level). Isoform 2 and isoform 3 are expressed in the myocardium (at protein level).

It is found in the cytoplasm. It localises to the myofibril. Its subcellular location is the sarcomere. The protein localises to the m line. The protein resides in the z line. It is found in the cell membrane. It localises to the sarcolemma. Its subcellular location is the nucleus. The protein localises to the secreted. The enzyme catalyses L-seryl-[protein] + ATP = O-phospho-L-seryl-[protein] + ADP + H(+). The catalysed reaction is L-threonyl-[protein] + ATP = O-phospho-L-threonyl-[protein] + ADP + H(+). Its function is as follows. Structural component of striated muscles which plays a role in myofibrillogenesis. Probably involved in the assembly of myosin into sarcomeric A bands in striated muscle. Has serine/threonine protein kinase activity and phosphorylates N-cadherin CDH2 and sodium/potassium-transporting ATPase subunit ATP1B1. Binds (via the PH domain) strongly to phosphatidylinositol 3,4-bisphosphate (PtdIns(3,4)P2) and phosphatidylinositol 4,5-bisphosphate (PtdIns(4,5)P2), and to a lesser extent to phosphatidylinositol 3-phosphate (PtdIns(3)P), phosphatidylinositol 4-phosphate (PtdIns(4)P), phosphatidylinositol 5-phosphate (PtdIns(5)P) and phosphatidylinositol 3,4,5-trisphosphate (PtdIns(3,4,5)P3). Isoform 2 and isoform 3: bind phosphatidylinositol bisphosphates (PIP2s) via their PH domains and negatively regulate the PI3K/AKT/mTOR signaling pathway, thus contributing to the regulation of cardiomyocyte size and adhesion. In Mus musculus (Mouse), this protein is Obscurin.